We begin with the raw amino-acid sequence, 721 residues long: Mitogen-activated protein kinase 6 (721 aa).

Residue Met-1 forms a Peptide (Met-Gly) (interchain with G-Cter in ubiquitin) linkage. One can recognise a Protein kinase domain in the interval 20–316; that stretch reads YMDLKPLGCG…AEEALSHPYM (297 aa). ATP is bound by residues 26 to 34 and Lys-49; that span reads LGCGGNGLV. The active-site Proton acceptor is the Asp-152. Ser-189 carries the phosphoserine; by PAK1, PAK2 and PAK3 modification. The SEG motif signature appears at 189 to 191; the sequence is SEG. Residues 332–337 carry the FRIEDE motif motif; that stretch reads FHIEDE. Phosphoserine is present on residues Ser-386, Ser-452, Ser-556, Ser-558, Ser-665, and Ser-684. Positions 701-715 are enriched in polar residues; that stretch reads AMKSSPQIPHQTYSS. A disordered region spans residues 701–721; that stretch reads AMKSSPQIPHQTYSSILKHLN.

It belongs to the protein kinase superfamily. CMGC Ser/Thr protein kinase family. MAP kinase subfamily. In terms of assembly, heterodimer with ERK4/MAPK4. Interacts with (via FRIEDE motif) MAPKAPK5. Interacts with UBE3A; this interaction may be indirect and mediated by HERC2, possibly via HERC2 interaction with NEURL4. The cofactor is Mg(2+). Phosphorylated at Ser-189 by PAK1, PAK2 and PAK3 resulting in catalytic activation. Phosphorylated by MAPKAPK5 at other sites. Post-translationally, ubiquitination at Met-1 leads to degradation by the proteasome pathway. Highest expression in the skeletal muscle, followed by the brain. Also found in heart, placenta, lung, liver, pancreas, kidney and skin fibroblasts.

The protein resides in the cytoplasm. It is found in the nucleus. It carries out the reaction L-seryl-[protein] + ATP = O-phospho-L-seryl-[protein] + ADP + H(+). The catalysed reaction is L-threonyl-[protein] + ATP = O-phospho-L-threonyl-[protein] + ADP + H(+). With respect to regulation, activated by phosphorylation at Ser-189. In terms of biological role, atypical MAPK protein. Phosphorylates microtubule-associated protein 2 (MAP2) and MAPKAPK5. The precise role of the complex formed with MAPKAPK5 is still unclear, but the complex follows a complex set of phosphorylation events: upon interaction with atypical MAPKAPK5, ERK3/MAPK6 is phosphorylated at Ser-189 and then mediates phosphorylation and activation of MAPKAPK5, which in turn phosphorylates ERK3/MAPK6. May promote entry in the cell cycle. In Homo sapiens (Human), this protein is Mitogen-activated protein kinase 6 (MAPK6).